The sequence spans 283 residues: Pantothenate synthetase (283 aa).

30–37 (MGNLHDGH) provides a ligand contact to ATP. Histidine 37 acts as the Proton donor in catalysis. Glutamine 61 is a binding site for (R)-pantoate. Glutamine 61 is a binding site for beta-alanine. 149–152 (GEKD) provides a ligand contact to ATP. Glutamine 155 is a (R)-pantoate binding site. Position 186 to 189 (186 to 189 (LSSR)) interacts with ATP.

The protein belongs to the pantothenate synthetase family. In terms of assembly, homodimer.

Its subcellular location is the cytoplasm. The enzyme catalyses (R)-pantoate + beta-alanine + ATP = (R)-pantothenate + AMP + diphosphate + H(+). It functions in the pathway cofactor biosynthesis; (R)-pantothenate biosynthesis; (R)-pantothenate from (R)-pantoate and beta-alanine: step 1/1. In terms of biological role, catalyzes the condensation of pantoate with beta-alanine in an ATP-dependent reaction via a pantoyl-adenylate intermediate. In Escherichia coli O157:H7, this protein is Pantothenate synthetase.